The primary structure comprises 494 residues: MIDMRSIQKSFGANIVLNGVDFEVLPGEVHALMGENGAGKSTLIKVLTGIYERDGGTIVVNGREVHYRHPKEAERDGIVVIHQELNVIPTLTVAENIFLGREPKIGRTGVIRYKEMEQQAASYLRRLGMDLDPRELAGRLSVGKQQMIEIARAISTNAKCLIMDEPTAALTEREIQALFSVIPTLKQQGVAVVYISHRMEEIFTICDRISVLRDGQFIGTKRVKETNFDEIVQMMVGRQIGERFPKRRVTIGEERLRVERLTKKGLFENVSFSVRAGEVLGVAGLMGSGRTEIMEAIFGARPFDEGDIYIDGRPVRIRSPRQAVEHGIAMITEDRKQKGLILEMSVHENLTLPKLEQLATAGFIQSSKERDVVLTYIHLLNIKASSPDLPVKALSGGNQQKVVFGKWLAMNPRILILDEPTRGVDVGAKKEIYEVINELAAQGAAIIMISSELPEVLGMSDRVMVVHEGKVQAILENDGLDQETIMRAATGGNR.

ABC transporter domains follow at residues 2–239 (IDMR…VGRQ) and 251–493 (IGEE…TGGN). 34–41 (GENGAGKS) serves as a coordination point for ATP.

Belongs to the ABC transporter superfamily. Ribose importer (TC 3.A.1.2.1) family. The complex is composed of an ATP-binding protein (RbsA), two transmembrane proteins (RbsC) and a solute-binding protein (RbsB).

The protein resides in the cell membrane. The enzyme catalyses D-ribose(out) + ATP + H2O = D-ribose(in) + ADP + phosphate + H(+). Its function is as follows. Part of the ABC transporter complex RbsABC involved in ribose import. Responsible for energy coupling to the transport system. The protein is Ribose import ATP-binding protein RbsA of Geobacillus kaustophilus (strain HTA426).